The following is a 979-amino-acid chain: Protein SMAX1-LIKE 6 (979 aa).

The Clp R domain occupies 8–190; the sequence is ARECLTEEAA…PVTQLSSRFS (183 aa). 2 repeat regions span residues 12 to 86 and 100 to 190; these read LTEE…LDRL and VSNS…SRFS. An EAR motif is present at residues 833–837; it reads LDLNL.

This sequence belongs to the ClpA/ClpB family. In terms of assembly, interacts with TPL/TPR in an EAR-motif dependent manner. Interacts with TPR3. Interacts with MAX2 and TPR2. Interacts with D14. The interaction with D14 occurs in the presence of (2'R) stereoisomers of strigolactones, but not (2'S) stereoisomers. In terms of processing, ubiquitinated upon strigolactone treatment. Probable proteolytic target of SCF(MAX2)-mediated stigolactone signaling. Detected in roots, seedlings and axillary branches. Expressed in the primary rosette buds and expanding leaves of adult rosettes, the vasculature of the hypocotyls, cotyledons, and mature roots, and in the midvein and petioles of young leaves.

The protein resides in the nucleus. Functionally, probable component of a transcriptional corepressor complex involved in branching control. Regulates cotyledon expansion and lateral root growth, but not germination or hypocotyl elongation. Promotes auxin transport and PIN1 accumulation in the stem and represses BRC1/TCP18 expression in axillary buds. In Arabidopsis thaliana (Mouse-ear cress), this protein is Protein SMAX1-LIKE 6.